Consider the following 60-residue polypeptide: MADLKITLIKSAVHRLPKQRAIVKSLGLGRVSSSVVKPNNEATRGAIFHIAHLVNVEEVK.

The protein belongs to the universal ribosomal protein uL30 family. Part of the 50S ribosomal subunit.

The protein is Large ribosomal subunit protein uL30 of Leuconostoc mesenteroides subsp. mesenteroides (strain ATCC 8293 / DSM 20343 / BCRC 11652 / CCM 1803 / JCM 6124 / NCDO 523 / NBRC 100496 / NCIMB 8023 / NCTC 12954 / NRRL B-1118 / 37Y).